The sequence spans 1451 residues: Spike glycoprotein (1451 aa).

The N-terminal stretch at 1–31 is a signal peptide; it reads MIVLTLCLFLFLYSSVSCTSNNDCVQVNVTQ. The tract at residues 32-779 is S1; it reads LPGNENIIKD…WTTTPNFYYY (748 aa). Residues 32-1392 are Virion surface-facing; the sequence is LPGNENIIKD…NRIETYVKWP (1361 aa). Residues 660 to 803 are interaction with host ANPEP; it reads VIYEEGDNIV…IDNDIDCEPI (144 aa). The interval 780–1451 is S2; it reads SIYNYTNVMN…YEPIEKVHVH (672 aa). The interval 1024 to 1045 is fusion peptide; it reads TGGITLGALSGGAVAIPFAVAV. The tract at residues 1039 to 1158 is heptad repeat 1 (HR1); that stretch reads IPFAVAVQAR…QVDRLITGRL (120 aa). 2 coiled-coil regions span residues 1106–1150 and 1340–1382; these read QDVV…DAQV and TYLN…LEWL. The heptad repeat 2 (HR2) stretch occupies residues 1307-1404; that stretch reads PDYIDINQTV…VWLLIGLVVI (98 aa). A helical membrane pass occupies residues 1393–1412; sequence WYVWLLIGLVVIFCIPILLF. Residues 1413 to 1451 are Intravirion-facing; the sequence is CCCSTGCCGCIGCLGSCCHSICSRGQFESYEPIEKVHVH. Positions 1447 to 1451 match the KxHxx motif; that stretch reads KVHVH.

It belongs to the alphacoronaviruses spike protein family. Homotrimer. During virus morphogenesis, found in a complex with M and HE proteins. Interacts with host ANPEP.

Its subcellular location is the virion membrane. It is found in the host endoplasmic reticulum-Golgi intermediate compartment membrane. Its function is as follows. S1 region attaches the virion to the cell membrane by interacting with host ANPEP/aminopeptidase N, initiating the infection. Binding to the receptor probably induces conformational changes in the S glycoprotein unmasking the fusion peptide of S2 region and activating membranes fusion. S2 region belongs to the class I viral fusion protein. Under the current model, the protein has at least 3 conformational states: pre-fusion native state, pre-hairpin intermediate state, and post-fusion hairpin state. During viral and target cell membrane fusion, the coiled coil regions (heptad repeats) regions assume a trimer-of-hairpins structure, positioning the fusion peptide in close proximity to the C-terminal region of the ectodomain. The formation of this structure appears to drive apposition and subsequent fusion of viral and target cell membranes. The sequence is that of Spike glycoprotein from Canine coronavirus (strain Insavc-1) (CCoV).